The primary structure comprises 670 residues: DNA ligase (670 aa).

Residues 32–36, 81–82, and glutamate 114 contribute to the NAD(+) site; these read DSEYD and SL. Lysine 116 (N6-AMP-lysine intermediate) is an active-site residue. Positions 137, 174, 291, and 315 each coordinate NAD(+). 4 residues coordinate Zn(2+): cysteine 409, cysteine 412, cysteine 427, and cysteine 433. In terms of domain architecture, BRCT spans 592-670; the sequence is ASENLFKDKT…EEEFLAQITR (79 aa).

It belongs to the NAD-dependent DNA ligase family. LigA subfamily. Mg(2+) serves as cofactor. It depends on Mn(2+) as a cofactor.

It catalyses the reaction NAD(+) + (deoxyribonucleotide)n-3'-hydroxyl + 5'-phospho-(deoxyribonucleotide)m = (deoxyribonucleotide)n+m + AMP + beta-nicotinamide D-nucleotide.. DNA ligase that catalyzes the formation of phosphodiester linkages between 5'-phosphoryl and 3'-hydroxyl groups in double-stranded DNA using NAD as a coenzyme and as the energy source for the reaction. It is essential for DNA replication and repair of damaged DNA. In Haemophilus influenzae (strain PittGG), this protein is DNA ligase.